The following is a 290-amino-acid chain: Carbonic anhydrase-related protein (290 aa).

At serine 5 the chain carries Phosphoserine. Residues 27–289 (VEWGYEEGVE…LSDRVIRAAF (263 aa)) enclose the Alpha-carbonic anhydrase domain. The active-site Proton donor/acceptor is the histidine 87. The Zn(2+) site is built by histidine 118 and histidine 141.

This sequence belongs to the alpha-carbonic anhydrase family.

In terms of biological role, does not have a carbonic anhydrase catalytic activity. The polypeptide is Carbonic anhydrase-related protein (Ca8) (Rattus norvegicus (Rat)).